We begin with the raw amino-acid sequence, 932 residues long: Protein translocase subunit SecA, chloroplastic (932 aa).

Residue 95–102 coordinates ATP; it reads MRTGEGKT. Basic and acidic residues predominate over residues 632-641; that stretch reads HESRRVDNQL. Residues 632 to 653 form a disordered region; that stretch reads HESRRVDNQLRGRSGRQGDPGS.

The protein belongs to the SecA family.

The protein localises to the plastid. It localises to the chloroplast stroma. Its subcellular location is the chloroplast thylakoid membrane. It catalyses the reaction ATP + H2O + chloroplast-proteinSide 1 = ADP + phosphate + chloroplast-proteinSide 2.. Functionally, has a central role in coupling the hydrolysis of ATP to the transfer of proteins across the thylakoid membrane. The chain is Protein translocase subunit SecA, chloroplastic from Ostreococcus lucimarinus (strain CCE9901).